The sequence spans 420 residues: D-tagatose-1,6-bisphosphate aldolase subunit GatZ (420 aa).

This sequence belongs to the GatZ/KbaZ family. GatZ subfamily. As to quaternary structure, forms a complex with GatY.

It participates in carbohydrate metabolism; D-tagatose 6-phosphate degradation; D-glyceraldehyde 3-phosphate and glycerone phosphate from D-tagatose 6-phosphate: step 2/2. Component of the tagatose-1,6-bisphosphate aldolase GatYZ that is required for full activity and stability of the Y subunit. Could have a chaperone-like function for the proper and stable folding of GatY. When expressed alone, GatZ does not show any aldolase activity. Is involved in the catabolism of galactitol. This is D-tagatose-1,6-bisphosphate aldolase subunit GatZ from Escherichia coli O6:H1 (strain CFT073 / ATCC 700928 / UPEC).